The chain runs to 152 residues: UPF0266 membrane protein Ent638_2389 (152 aa).

The next 3 helical transmembrane spans lie at 6–26, 45–65, and 67–87; these read IVLV…EFIM, VDAF…VMSQ, and ALLT…LFWI.

It belongs to the UPF0266 family.

The protein resides in the cell inner membrane. The polypeptide is UPF0266 membrane protein Ent638_2389 (Enterobacter sp. (strain 638)).